The following is a 238-amino-acid chain: Uridylate kinase (238 aa).

12 to 15 (KLSG) is an ATP binding site. Gly-54 is a binding site for UMP. ATP contacts are provided by Gly-55 and Arg-59. UMP-binding positions include Asp-74 and 135-142 (TGNPYFTT). Thr-162, Asn-163, Tyr-168, and Asp-171 together coordinate ATP.

Belongs to the UMP kinase family. In terms of assembly, homohexamer.

The protein localises to the cytoplasm. The enzyme catalyses UMP + ATP = UDP + ADP. The protein operates within pyrimidine metabolism; CTP biosynthesis via de novo pathway; UDP from UMP (UMPK route): step 1/1. Inhibited by UTP. Its function is as follows. Catalyzes the reversible phosphorylation of UMP to UDP. The chain is Uridylate kinase from Bradyrhizobium sp. (strain BTAi1 / ATCC BAA-1182).